The primary structure comprises 226 residues: Agamous-like MADS-box protein AGL23 (226 aa).

The MADS-box domain occupies 6-66 (LGRRKVEIVK…GKVFSFGHPN (61 aa)). Residues 95–132 (VQMLNKSYTEVKAEVEKEQKNKQSRAQNERENENAEEW) are a coiled coil. Residues 108–127 (EVEKEQKNKQSRAQNERENE) are compositionally biased toward basic and acidic residues. The segment at 108–131 (EVEKEQKNKQSRAQNERENENAEE) is disordered.

It is found in the nucleus. In terms of biological role, probable transcription factor that controls female gametophyte (megagametogenesis) development and chloroplast biogenesis during embryo development. This chain is Agamous-like MADS-box protein AGL23, found in Arabidopsis thaliana (Mouse-ear cress).